Consider the following 337-residue polypeptide: Anthranilate phosphoribosyltransferase (337 aa).

Residues Gly80, 83-84 (GD), Thr88, 90-93 (NIST), 108-116 (KHGNRAVSS), and Ser120 each bind 5-phospho-alpha-D-ribose 1-diphosphate. Gly80 serves as a coordination point for anthranilate. Residue Ser92 participates in Mg(2+) binding. Asn111 provides a ligand contact to anthranilate. Arg166 contributes to the anthranilate binding site. 2 residues coordinate Mg(2+): Asp224 and Glu225.

This sequence belongs to the anthranilate phosphoribosyltransferase family. In terms of assembly, homodimer. It depends on Mg(2+) as a cofactor.

It catalyses the reaction N-(5-phospho-beta-D-ribosyl)anthranilate + diphosphate = 5-phospho-alpha-D-ribose 1-diphosphate + anthranilate. It functions in the pathway amino-acid biosynthesis; L-tryptophan biosynthesis; L-tryptophan from chorismate: step 2/5. Functionally, catalyzes the transfer of the phosphoribosyl group of 5-phosphorylribose-1-pyrophosphate (PRPP) to anthranilate to yield N-(5'-phosphoribosyl)-anthranilate (PRA). This chain is Anthranilate phosphoribosyltransferase, found in Anaeromyxobacter sp. (strain K).